A 143-amino-acid polypeptide reads, in one-letter code: MTKTFSAKAADVVHEWFVIDATDKVLGRVASEVALRLRGKHKAIYTPHVDTGDFIVIINAAQLRVTGAKSTDKIYYSHSGYPGGISSVNFRDMQAKFPGRALEKAVKGMLPKGPLGYAMIKKLKVYGGAEHPHTAQQPKVLEL.

Belongs to the universal ribosomal protein uL13 family. As to quaternary structure, part of the 50S ribosomal subunit.

This protein is one of the early assembly proteins of the 50S ribosomal subunit, although it is not seen to bind rRNA by itself. It is important during the early stages of 50S assembly. This Albidiferax ferrireducens (strain ATCC BAA-621 / DSM 15236 / T118) (Rhodoferax ferrireducens) protein is Large ribosomal subunit protein uL13.